Here is a 134-residue protein sequence, read N- to C-terminus: D-dopachrome decarboxylase-like protein (134 aa).

It belongs to the MIF family.

The protein resides in the cytoplasm. May have lyase activity. The polypeptide is D-dopachrome decarboxylase-like protein (DDTL) (Homo sapiens (Human)).